A 358-amino-acid polypeptide reads, in one-letter code: Hydroxyproline O-arabinosyltransferase 2 (358 aa).

The helical; Signal-anchor transmembrane segment at 7-26 (YFFPILMTLSLFLIIRYNYI) threads the bilayer.

Ubiquitous.

Its subcellular location is the golgi apparatus. It is found in the cis-Golgi network membrane. It catalyses the reaction trans-4-hydroxy-L-prolyl-[protein] + UDP-beta-L-arabinofuranose = O-(beta-L-arabinofuranosyl)-trans-4-hydroxy-L-prolyl-[protein] + UDP + H(+). Glycosyltransferase involved in the O-arabinosylation of several proteins including extensins and small signaling peptides. Catalyzes the transfer of the initial L-arabinose to the hydroxyl group of Hyp residues. Contributes redundantly with HPAT1 and HPAT3 to arabinosylation of EXT3. The protein is Hydroxyproline O-arabinosyltransferase 2 of Arabidopsis thaliana (Mouse-ear cress).